The chain runs to 368 residues: tRNA(Met) cytidine acetate ligase (368 aa).

ATP is bound by residues 7-20, G96, N152, and R175; that span reads IAEF…HKYL.

It belongs to the TmcAL family.

It is found in the cytoplasm. The catalysed reaction is cytidine(34) in elongator tRNA(Met) + acetate + ATP = N(4)-acetylcytidine(34) in elongator tRNA(Met) + AMP + diphosphate. Functionally, catalyzes the formation of N(4)-acetylcytidine (ac(4)C) at the wobble position of elongator tRNA(Met), using acetate and ATP as substrates. First activates an acetate ion to form acetyladenylate (Ac-AMP) and then transfers the acetyl group to tRNA to form ac(4)C34. The polypeptide is tRNA(Met) cytidine acetate ligase (Streptococcus pyogenes serotype M4 (strain MGAS10750)).